A 222-amino-acid chain; its full sequence is Eukaryotic translation initiation factor 3 subunit K (222 aa).

One can recognise a PCI domain in the interval 46–208 (YDLEANLAVL…KIKTKNITEK (163 aa)).

Belongs to the eIF-3 subunit K family. Component of the eukaryotic translation initiation factor 3 (eIF-3) complex. The eIF-3 complex interacts with pix.

It localises to the cytoplasm. In terms of biological role, component of the eukaryotic translation initiation factor 3 (eIF-3) complex, which is involved in protein synthesis of a specialized repertoire of mRNAs and, together with other initiation factors, stimulates binding of mRNA and methionyl-tRNAi to the 40S ribosome. The eIF-3 complex specifically targets and initiates translation of a subset of mRNAs involved in cell proliferation. The protein is Eukaryotic translation initiation factor 3 subunit K of Drosophila persimilis (Fruit fly).